We begin with the raw amino-acid sequence, 258 residues long: Phosphatidylglycerol--prolipoprotein diacylglyceryl transferase (258 aa).

7 helical membrane passes run 9 to 29, 53 to 73, 90 to 110, 117 to 139, 169 to 189, 198 to 218, and 230 to 250; these read ILIQLGPIAVHWYGALFATGF, LLTYIFIGTVVGARLAHTLIY, EGGLASHGGGIGVLLAIWLFV, KFLWLADRLAIPTALTGCFIRLG, PVQLYEAASYFAIFVLLLMLF, GFLFGLFLTLVFAARFIIEYF, and LISVGQWLSVPFVLAGIVLML. Arg137 contacts a 1,2-diacyl-sn-glycero-3-phospho-(1'-sn-glycerol).

It belongs to the Lgt family.

The protein localises to the cell inner membrane. It carries out the reaction L-cysteinyl-[prolipoprotein] + a 1,2-diacyl-sn-glycero-3-phospho-(1'-sn-glycerol) = an S-1,2-diacyl-sn-glyceryl-L-cysteinyl-[prolipoprotein] + sn-glycerol 1-phosphate + H(+). It functions in the pathway protein modification; lipoprotein biosynthesis (diacylglyceryl transfer). Catalyzes the transfer of the diacylglyceryl group from phosphatidylglycerol to the sulfhydryl group of the N-terminal cysteine of a prolipoprotein, the first step in the formation of mature lipoproteins. This chain is Phosphatidylglycerol--prolipoprotein diacylglyceryl transferase, found in Tolumonas auensis (strain DSM 9187 / NBRC 110442 / TA 4).